Consider the following 141-residue polypeptide: Holo-[acyl-carrier-protein] synthase (141 aa).

Asp8 and Glu63 together coordinate Mg(2+).

The protein belongs to the P-Pant transferase superfamily. AcpS family. Mg(2+) serves as cofactor.

Its subcellular location is the cytoplasm. The enzyme catalyses apo-[ACP] + CoA = holo-[ACP] + adenosine 3',5'-bisphosphate + H(+). Functionally, transfers the 4'-phosphopantetheine moiety from coenzyme A to a Ser of acyl-carrier-protein. The sequence is that of Holo-[acyl-carrier-protein] synthase from Rhodospirillum centenum (strain ATCC 51521 / SW).